The following is an 839-amino-acid chain: NT-3 growth factor receptor (839 aa).

The first 31 residues, 1–31, serve as a signal peptide directing secretion; that stretch reads MDVSLCPAKCSFWRIFLLGSVWLDYVGSVLA. 2 disulfides stabilise this stretch: Cys-32-Cys-38 and Cys-36-Cys-45. The Extracellular segment spans residues 32 to 429; sequence CPANCVCSKT…TVTHKPEEDT (398 aa). N-linked (GlcNAc...) asparagine glycans are attached at residues Asn-72 and Asn-79. LRR repeat units lie at residues 104-125 and 128-149; these read GLQKLTIKNSGLRSIQPRAFAK and HLRYINLSSNRLTTLSWQLFQT. Residues Asn-133 and Asn-163 are each glycosylated (N-linked (GlcNAc...) asparagine). Positions 160–209 constitute an LRRCT domain; it reads NFFNCSCDIRWMQLWQEQGEAKLNSQNLYCINADGSQLPLFRMNISQCDL. 2 cysteine pairs are disulfide-bonded: Cys-164–Cys-189 and Cys-166–Cys-207. Residues Asn-203, Asn-218, Asn-232, Asn-259, Asn-267, Asn-272, and Asn-294 are each glycosylated (N-linked (GlcNAc...) asparagine). 2 Ig-like C2-type domains span residues 210–300 and 309–382; these read PEIS…VALT and SLEE…IAKN. Cys-231 and Cys-284 are disulfide-bonded. The cysteines at positions 320 and 362 are disulfide-linked. 2 N-linked (GlcNAc...) asparagine glycosylation sites follow: Asn-375 and Asn-388. The chain crosses the membrane as a helical span at residues 430–453; the sequence is FGVSIAVGLAAFACVLLVVLFVMI. The Cytoplasmic segment spans residues 454 to 839; it reads NKYGRRSKFG…ATPIYLDILG (386 aa). Ser-493 carries the post-translational modification Phosphoserine. Residue Tyr-516 is modified to Phosphotyrosine; by autocatalysis. In terms of domain architecture, Protein kinase spans 538 to 839; that stretch reads IVLKRELGEG…ATPIYLDILG (302 aa). Residues 544-552 and Lys-572 each bind ATP; that span reads LGEGAFGKV. Catalysis depends on Asp-679, which acts as the Proton acceptor. Phosphotyrosine; by autocatalysis is present on residues Tyr-705, Tyr-709, and Tyr-710.

The protein belongs to the protein kinase superfamily. Tyr protein kinase family. Insulin receptor subfamily. As to quaternary structure, exists in a dynamic equilibrium between monomeric (low affinity) and dimeric (high affinity) structures. Binds SH2B2. Interacts with SQSTM1 and KIDINS220. Interacts with PTPRS. Interacts with MAPK8IP3/JIP3. Ligand-mediated auto-phosphorylation. As to expression, widely expressed but mainly in nervous tissue. Isoform 2 is expressed at higher levels in adult brain than in fetal brain.

The protein localises to the membrane. The catalysed reaction is L-tyrosyl-[protein] + ATP = O-phospho-L-tyrosyl-[protein] + ADP + H(+). In terms of biological role, receptor tyrosine kinase involved in nervous system and probably heart development. Upon binding of its ligand NTF3/neurotrophin-3, NTRK3 autophosphorylates and activates different signaling pathways, including the phosphatidylinositol 3-kinase/AKT and the MAPK pathways, that control cell survival and differentiation. In Homo sapiens (Human), this protein is NT-3 growth factor receptor (NTRK3).